The chain runs to 475 residues: Ornithine aminotransferase, mitochondrial (475 aa).

Residues methionine 1–phenylalanine 16 constitute a mitochondrion transit peptide. The disordered stretch occupies residues arginine 23 to leucine 43. The segment covering proline 29 to glutamine 41 has biased composition (low complexity). Pyridoxal 5'-phosphate is bound by residues glycine 142–alanine 143 and phenylalanine 177. Arginine 180 is a binding site for L-ornithine. Aspartate 265–glutamine 268 contacts pyridoxal 5'-phosphate. Lysine 294 is subject to N6-(pyridoxal phosphate)lysine. Position 323 (serine 323) interacts with L-ornithine. A pyridoxal 5'-phosphate-binding site is contributed by threonine 324.

The protein belongs to the class-III pyridoxal-phosphate-dependent aminotransferase family. As to quaternary structure, homotetramer. Pyridoxal 5'-phosphate is required as a cofactor.

The protein localises to the mitochondrion matrix. It carries out the reaction a 2-oxocarboxylate + L-ornithine = L-glutamate 5-semialdehyde + an L-alpha-amino acid. The protein operates within amino-acid biosynthesis; L-proline biosynthesis; L-glutamate 5-semialdehyde from L-ornithine: step 1/1. Its function is as follows. Mediates degradation of arginine for nitrogen recycling. Plays a role in non-host disease resistance by regulating pyrroline-5-carboxylate metabolism-induced hypersensitive response. This is Ornithine aminotransferase, mitochondrial from Arabidopsis thaliana (Mouse-ear cress).